We begin with the raw amino-acid sequence, 216 residues long: GTP cyclohydrolase-2 (216 aa).

Position 51–55 (51–55 (RIHSE)) interacts with GTP. Zn(2+) is bound by residues Cys56, Cys67, and Cys69. Residues Gln72, 94-96 (EGR), and Thr116 contribute to the GTP site. The active-site Proton acceptor is Asp128. Residue Arg130 is the Nucleophile of the active site. Residues Thr151 and Lys156 each coordinate GTP.

It belongs to the GTP cyclohydrolase II family. Requires Zn(2+) as cofactor.

It catalyses the reaction GTP + 4 H2O = 2,5-diamino-6-hydroxy-4-(5-phosphoribosylamino)-pyrimidine + formate + 2 phosphate + 3 H(+). Its pathway is cofactor biosynthesis; riboflavin biosynthesis; 5-amino-6-(D-ribitylamino)uracil from GTP: step 1/4. Catalyzes the conversion of GTP to 2,5-diamino-6-ribosylamino-4(3H)-pyrimidinone 5'-phosphate (DARP), formate and pyrophosphate. This Haemophilus influenzae (strain 86-028NP) protein is GTP cyclohydrolase-2.